A 391-amino-acid polypeptide reads, in one-letter code: Elongation factor Tu (391 aa).

A tr-type G domain is found at 10–201 (KPHVNIGTIG…AVDAYIPTPE (192 aa)). Residues 19–26 (GHVDHGKT) are G1. Residue 19–26 (GHVDHGKT) coordinates GTP. Mg(2+) is bound at residue threonine 26. The G2 stretch occupies residues 55 to 59 (GITIS). The G3 stretch occupies residues 76–79 (DCPG). GTP contacts are provided by residues 76-80 (DCPGH) and 131-134 (NKVD). Residues 131–134 (NKVD) are G4. The tract at residues 169–171 (SAL) is G5.

The protein belongs to the TRAFAC class translation factor GTPase superfamily. Classic translation factor GTPase family. EF-Tu/EF-1A subfamily. In terms of assembly, monomer.

It is found in the cytoplasm. It catalyses the reaction GTP + H2O = GDP + phosphate + H(+). Functionally, GTP hydrolase that promotes the GTP-dependent binding of aminoacyl-tRNA to the A-site of ribosomes during protein biosynthesis. The polypeptide is Elongation factor Tu (Rhizobium meliloti (strain 1021) (Ensifer meliloti)).